The sequence spans 1051 residues: Putative transcription factor SEF1 (1051 aa).

Positions 1–10 (MSTDVSERGA) are enriched in basic and acidic residues. 2 disordered regions span residues 1–54 (MSTD…SEES) and 67–90 (GQASPDRSKVSKQQNGASGHRPVT). The segment covering 11-21 (EAGSSSGLLSS) has biased composition (low complexity). The segment at residues 92-122 (CTHCRQHKIKCNASENFPSSCSRCERMGLQC) is a DNA-binding region (zn(2)-C6 fungal-type). A compositionally biased stretch (low complexity) spans 206-218 (SSVKSSVNTPSGS). Disordered regions lie at residues 206-227 (SSVKSSVNTPSGSYSASAVDVS), 738-759 (EKNRKEQPVHTAATGSQDTEKR), and 927-968 (ASGN…QPAP).

It is found in the nucleus. Functionally, putative transcription factor. The sequence is that of Putative transcription factor SEF1 (SEF1) from Eremothecium gossypii (strain ATCC 10895 / CBS 109.51 / FGSC 9923 / NRRL Y-1056) (Yeast).